The following is a 564-amino-acid chain: Nucleoprotein (564 aa).

The segment at Leu-54–Ile-236 is binding site for the cap structure m7GTP. Positions 380 and 382 each coordinate Mn(2+). The Zn(2+) site is built by Glu-390, Cys-497, His-500, and Cys-525. Position 529 (Asp-529) interacts with Mn(2+).

Belongs to the arenaviridae nucleocapsid protein family. Homomultimerizes to form the nucleocapsid. Binds to viral genomic RNA. Interacts with glycoprotein G2. Interacts with protein Z; this interaction probably directs the encapsidated genome to budding sites. Interacts with protein L; this interaction does not interfere with Z-L interaction. Interacts with host IKBKE (via Protein kinase domain); the interaction inhibits IKBKE kinase activity.

It is found in the virion. The protein localises to the host cytoplasm. In terms of biological role, encapsidates the genome, protecting it from nucleases. The encapsidated genomic RNA is termed the nucleocapsid (NC). Serves as template for viral transcription and replication. The increased presence of protein N in host cell does not seem to trigger the switch from transcription to replication as observed in other negative strain RNA viruses. Through the interaction with host IKBKE, strongly inhibits the phosphorylation and nuclear translocation of host IRF3, a protein involved in interferon activation pathway, leading to the inhibition of interferon-beta and IRF3-dependent promoters activation. Also encodes a functional 3'-5' exoribonuclease that degrades preferentially dsRNA substrates and thereby participates in the suppression of interferon induction. In Akodon azarae (Azara's grass mouse), this protein is Nucleoprotein.